The primary structure comprises 357 residues: UPF0744 protein C106.03 (357 aa).

Residue Ser282 is modified to Phosphoserine.

Belongs to the UPF0744 family.

Its subcellular location is the cytoplasm. In Schizosaccharomyces pombe (strain 972 / ATCC 24843) (Fission yeast), this protein is UPF0744 protein C106.03.